The sequence spans 670 residues: MINVMNPMKGGTEKGLDPQLWHACAGGMVRMPPMNSKVFYFPQGHAENAYDCVDFGNLPIPPMVLCRVLAIKYMADAESDEVFAKLRLIPLKDDEYVDHEYGDGEDSNGFESNSEKTPSFAKTLTQSDANNGGGFSVPRYCAETIFPRLDYNAEPPVQTILAKDVHGDVWKFRHIYRGTPRRHLLTTGWSNFVNQKKLVAGDSIVFMRAENGDLCVGIRRAKRGGIGNGPEYSAGWNPIGGSCGYSSLLREDESNSLRRSNCSLADRKGKVTAESVIEAATLAISGRPFEVVYYPRASTSEFCVKALDARAAMRIPWCSGMRFKMAFETEDSSRISWFMGTVSAVNVSDPIRWPNSPWRLLQVAWDEPDLLQNVKRVNPWLVELVSNVHPIPLTSFSPPRKKMRLPQHPDYNNLINSIPVPSFPSNPLIRSSPLSSVLDNVPVGLQGARHNAHQYYGLSSSDLHHYYLNRPPPPPPPSSLQLSPSLGLRNIDTKNEKGFCFLTMGTTPCNDTKSKKSHIVLFGKLILPEEQLSEKGSTDTANIEKTQISSGGSNQNGVAGREFSSSDEGSPCSKKVHDASGLETGHCKVFMESDDVGRTLDLSVLGSYEELSRKLSDMFGIKKSEMLSSVLYRDASGAIKYAGNEPFSEFLKTARRLTILTEQGSESVVV.

The segment at residues 120–222 is a DNA-binding region (TF-B3); it reads FAKTLTQSDA…DLCVGIRRAK (103 aa). Positions 545–557 are enriched in polar residues; that stretch reads KTQISSGGSNQNG. The segment at 545–579 is disordered; sequence KTQISSGGSNQNGVAGREFSSSDEGSPCSKKVHDA. The PB1 domain maps to 584–664; sequence TGHCKVFMES…RRLTILTEQG (81 aa).

Belongs to the ARF family. In terms of assembly, homodimers and heterodimers.

Its subcellular location is the nucleus. Functionally, auxin response factors (ARFs) are transcriptional factors that bind specifically to the DNA sequence 5'-TGTCTC-3' found in the auxin-responsive promoter elements (AuxREs). Could act as transcriptional activator or repressor. Formation of heterodimers with Aux/IAA proteins may alter their ability to modulate early auxin response genes expression. The polypeptide is Auxin response factor 16 (ARF16) (Arabidopsis thaliana (Mouse-ear cress)).